Reading from the N-terminus, the 167-residue chain is uncharacterized protein (167 aa).

The interval 140–167 is disordered; sequence SSEEKKKKKKKKKEKSLHTEREKKKKKF. The segment covering 145-154 has biased composition (basic residues); that stretch reads KKKKKKKKEK.

This is an uncharacterized protein from Saccharomyces cerevisiae (strain ATCC 204508 / S288c) (Baker's yeast).